The sequence spans 201 residues: Molybdenum cofactor guanylyltransferase (201 aa).

GTP-binding positions include 15 to 17 (LCG), K28, D74, and D104. D104 provides a ligand contact to Mg(2+).

This sequence belongs to the MobA family. In terms of assembly, monomer. It depends on Mg(2+) as a cofactor.

It localises to the cytoplasm. It catalyses the reaction Mo-molybdopterin + GTP + H(+) = Mo-molybdopterin guanine dinucleotide + diphosphate. In terms of biological role, transfers a GMP moiety from GTP to Mo-molybdopterin (Mo-MPT) cofactor (Moco or molybdenum cofactor) to form Mo-molybdopterin guanine dinucleotide (Mo-MGD) cofactor. This is Molybdenum cofactor guanylyltransferase from Ectopseudomonas mendocina (strain ymp) (Pseudomonas mendocina).